A 635-amino-acid polypeptide reads, in one-letter code: 1-deoxy-D-xylulose-5-phosphate synthase (635 aa).

Thiamine diphosphate contacts are provided by residues His78 and 119–121 (GHA). Residue Asp151 participates in Mg(2+) binding. Residues 152 to 153 (GA), Asn180, and Tyr291 each bind thiamine diphosphate. A Mg(2+)-binding site is contributed by Asn180. A disordered region spans residues 305 to 325 (PAFEDRGGTPVTRGSDGRPPY). Glu374 provides a ligand contact to thiamine diphosphate.

It belongs to the transketolase family. DXPS subfamily. Homodimer. Mg(2+) is required as a cofactor. It depends on thiamine diphosphate as a cofactor.

The catalysed reaction is D-glyceraldehyde 3-phosphate + pyruvate + H(+) = 1-deoxy-D-xylulose 5-phosphate + CO2. It functions in the pathway metabolic intermediate biosynthesis; 1-deoxy-D-xylulose 5-phosphate biosynthesis; 1-deoxy-D-xylulose 5-phosphate from D-glyceraldehyde 3-phosphate and pyruvate: step 1/1. In terms of biological role, catalyzes the acyloin condensation reaction between C atoms 2 and 3 of pyruvate and glyceraldehyde 3-phosphate to yield 1-deoxy-D-xylulose-5-phosphate (DXP). The chain is 1-deoxy-D-xylulose-5-phosphate synthase from Rhodopirellula baltica (strain DSM 10527 / NCIMB 13988 / SH1).